Reading from the N-terminus, the 200-residue chain is Mediator of RNA polymerase II transcription subunit 29 (200 aa).

2 stretches are compositionally biased toward low complexity: residues 1–20 (MAASQQQASATTSTASVSGP) and 36–48 (AQLVGPAQSGLLQ). A disordered region spans residues 1–48 (MAASQQQASATTSTASVSGPGSAGGSGPQQQPQPPAQLVGPAQSGLLQ). Alanine 2 carries the N-acetylalanine modification.

It belongs to the Mediator complex subunit 29 family. In terms of assembly, component of the TRAP/SMCC mediator complex. Interacts with MED20/TRFP. Associates with the MED18-MED20 heteromer.

Its subcellular location is the nucleus. Component of the mediator complex, a complex that can either repress or activate transcription. Mediator complexes are essential for basal and regulated expression of nearly all RNA polymerase II-dependent genes. They may act as a bridge, conveying regulatory information from enhancers and other control elements to the promoter. The polypeptide is Mediator of RNA polymerase II transcription subunit 29 (MED29) (Bos taurus (Bovine)).